The primary structure comprises 564 residues: Dihydroxy-acid dehydratase (564 aa).

Cys-53 contacts [2Fe-2S] cluster. Asp-85 provides a ligand contact to Mg(2+). A [2Fe-2S] cluster-binding site is contributed by Cys-126. Mg(2+) is bound by residues Asp-127 and Lys-128. N6-carboxylysine is present on Lys-128. Cys-203 is a binding site for [2Fe-2S] cluster. Mg(2+) is bound at residue Glu-454. Ser-480 serves as the catalytic Proton acceptor.

This sequence belongs to the IlvD/Edd family. In terms of assembly, homodimer. [2Fe-2S] cluster serves as cofactor. Requires Mg(2+) as cofactor.

It catalyses the reaction (2R)-2,3-dihydroxy-3-methylbutanoate = 3-methyl-2-oxobutanoate + H2O. The enzyme catalyses (2R,3R)-2,3-dihydroxy-3-methylpentanoate = (S)-3-methyl-2-oxopentanoate + H2O. It functions in the pathway amino-acid biosynthesis; L-isoleucine biosynthesis; L-isoleucine from 2-oxobutanoate: step 3/4. It participates in amino-acid biosynthesis; L-valine biosynthesis; L-valine from pyruvate: step 3/4. Functions in the biosynthesis of branched-chain amino acids. Catalyzes the dehydration of (2R,3R)-2,3-dihydroxy-3-methylpentanoate (2,3-dihydroxy-3-methylvalerate) into 2-oxo-3-methylpentanoate (2-oxo-3-methylvalerate) and of (2R)-2,3-dihydroxy-3-methylbutanoate (2,3-dihydroxyisovalerate) into 2-oxo-3-methylbutanoate (2-oxoisovalerate), the penultimate precursor to L-isoleucine and L-valine, respectively. The chain is Dihydroxy-acid dehydratase from Mycobacterium ulcerans (strain Agy99).